The following is a 376-amino-acid chain: NifS-like protein (376 aa).

Pyridoxal 5'-phosphate contacts are provided by residues Ser-58 to Glu-59 and Ser-184 to Asn-186.

Belongs to the class-V pyridoxal-phosphate-dependent aminotransferase family. NifS/IscS subfamily. It depends on pyridoxal 5'-phosphate as a cofactor.

The protein resides in the virion. In African swine fever virus (isolate Tick/Malawi/Lil 20-1/1983) (ASFV), this protein is NifS-like protein.